The primary structure comprises 336 residues: Meiotic drive suppressor wtf23 (336 aa).

Disordered regions lie at residues 1–21 (MKNN…LKTG) and 35–68 (DSEE…GTTD). The next 7 helical transmembrane spans lie at 73 to 93 (FLIK…LAVW), 110 to 130 (WTLF…LTYF), 140 to 160 (VTVI…AQCV), 169 to 189 (EMMI…FGCV), 206 to 226 (TISA…WTLW), 228 to 248 (ALSG…LVNG), and 261 to 281 (GYEI…LYEM).

This sequence belongs to the WTF family. Homomer. Interacts with other proteins that exhibit high sequence similarity.

Its subcellular location is the spore membrane. The protein resides in the vacuole membrane. Its function is as follows. Acts as a suppressor component of the dual wtf meiotic drive system, and can suppress but not confer meiotic drive by compatible poisons. Wtf meiotic drive systems promote unequal transmission of alleles from the parental zygote to progeny spores by encoding a poison and an antidote from the same locus; the poison is trans-acting and forms toxic aggregates in all spores within an ascus, wherease the antidote is spore-specific and targets aggregates for degradation by the vacuole. Meiotic drive by wtf systems therefore lead to poisoning of all progeny that do not inherit the dual poison/antidote allele, or express a compatible antidote. In Schizosaccharomyces kambucha (Fission yeast), this protein is Meiotic drive suppressor wtf23.